Consider the following 145-residue polypeptide: Histone H2B (145 aa).

Residues 1–52 are disordered; the sequence is MAPKAAAGKKPAEKKPVEEKKAEEVPAEKKPKAGKKLPKDAGRPDKKKKRAK. Lys9, Lys35, and Lys36 each carry N6-acetyllysine. Basic and acidic residues predominate over residues 10-44; that stretch reads KPAEKKPVEEKKAEEVPAEKKPKAGKKLPKDAGRP. Lys141 participates in a covalent cross-link: Glycyl lysine isopeptide (Lys-Gly) (interchain with G-Cter in ubiquitin).

Belongs to the histone H2B family. The nucleosome is a histone octamer containing two molecules each of H2A, H2B, H3 and H4 assembled in one H3-H4 heterotetramer and two H2A-H2B heterodimers. The octamer wraps approximately 147 bp of DNA. In terms of processing, can be acetylated to form H2BK6ac, H2BK33ac and H2BK34ac. Post-translationally, monoubiquitinated to form H2BK143ub1; may give a specific tag for epigenetic transcriptional activation. In terms of tissue distribution, in anthers, floral buds, pollen, petals and fruits.

The protein resides in the nucleus. The protein localises to the chromosome. Functionally, core component of nucleosome. Nucleosomes wrap and compact DNA into chromatin, limiting DNA accessibility to the cellular machineries which require DNA as a template. Histones thereby play a central role in transcription regulation, DNA repair, DNA replication and chromosomal stability. DNA accessibility is regulated via a complex set of post-translational modifications of histones, also called histone code, and nucleosome remodeling. The sequence is that of Histone H2B (HIS2B) from Capsicum annuum (Capsicum pepper).